A 648-amino-acid polypeptide reads, in one-letter code: Spike protein P3 (648 aa).

Interacts with P6.

The protein localises to the virion membrane. Its function is as follows. P3 protein is necessary for adsorption onto host cells. Attaches to a type IV pilus of the host. The protein is Spike protein P3 (P3) of Pseudomonas savastanoi pv. phaseolicola (Pseudomonas syringae pv. phaseolicola).